A 926-amino-acid polypeptide reads, in one-letter code: Storkhead-box protein 2 (926 aa).

Disordered stretches follow at residues 1-32, 338-393, 452-529, 564-586, 633-693, 723-802, and 823-926; these read MKKT…RSEK, EEEK…DIPG, EMPF…SYID, KEPS…PSYG, VKKL…SLDK, LLKS…VGTM, and TLLT…VTSV. Positions 18–32 are enriched in basic and acidic residues; that stretch reads FSDRASDRMRSRSEK. Residues 353–378 show a composition bias toward basic residues; it reads HSGRSKKSRTHRKSHGKSRSHSKTRV. Positions 379–393 are enriched in basic and acidic residues; it reads SKGDPSDGSHLDIPG. Residues 463-472 are compositionally biased toward basic residues; it reads SHSKVHRSHS. A compositionally biased stretch (basic and acidic residues) spans 473–495; it reads HTQDRRSRNERSNKAKERSRSMD. Residues 518–529 are compositionally biased toward polar residues; it reads QDDQTPSQSYID. 2 stretches are compositionally biased toward basic and acidic residues: residues 633–658 and 684–693; these read VKKL…EESP and HSAEPSSLDK. Residues 746–769 show a composition bias toward polar residues; that stretch reads LGTSAAQAMPPSQRQQEPGGNQEA. Residues 785-799 show a composition bias toward basic and acidic residues; the sequence is GANKNAEEEKNRDDV. Polar residues-rich tracts occupy residues 847 to 884 and 914 to 926; these read MDSS…QNPA and KPSN…VTSV.

In Mus musculus (Mouse), this protein is Storkhead-box protein 2 (Stox2).